A 275-amino-acid chain; its full sequence is tRNA pseudouridine synthase A (275 aa).

Catalysis depends on Asp-56, which acts as the Nucleophile. Tyr-109 is a substrate binding site.

It belongs to the tRNA pseudouridine synthase TruA family.

The catalysed reaction is uridine(38/39/40) in tRNA = pseudouridine(38/39/40) in tRNA. Functionally, formation of pseudouridine at positions 38, 39 and 40 in the anticodon stem and loop of transfer RNAs. This chain is tRNA pseudouridine synthase A, found in Methanothermobacter thermautotrophicus (strain ATCC 29096 / DSM 1053 / JCM 10044 / NBRC 100330 / Delta H) (Methanobacterium thermoautotrophicum).